A 933-amino-acid polypeptide reads, in one-letter code: Protein translocase subunit SecA (933 aa).

Residues Gln-87, 105-109 (GEGKT), and Asp-515 contribute to the ATP site. 3 disordered regions span residues 567 to 588 (ESRR…PGSS), 840 to 861 (DVEA…RHAA), and 880 to 933 (AAAE…CGKL). Positions 845–856 (EEQRRQEAERMQ) are enriched in basic and acidic residues. Over residues 880 to 897 (AAAEGDSAPTGGAQQQSA) the composition is skewed to low complexity. Over residues 905 to 914 (VAREGPKVGR) the composition is skewed to basic and acidic residues. Zn(2+) contacts are provided by Cys-918, Cys-920, Cys-929, and Cys-930. The segment covering 924 to 933 (KKYKHCCGKL) has biased composition (basic residues).

It belongs to the SecA family. Monomer and homodimer. Part of the essential Sec protein translocation apparatus which comprises SecA, SecYEG and auxiliary proteins SecDF-YajC and YidC. The cofactor is Zn(2+).

The protein localises to the cell inner membrane. It is found in the cytoplasm. The catalysed reaction is ATP + H2O + cellular proteinSide 1 = ADP + phosphate + cellular proteinSide 2.. In terms of biological role, part of the Sec protein translocase complex. Interacts with the SecYEG preprotein conducting channel. Has a central role in coupling the hydrolysis of ATP to the transfer of proteins into and across the cell membrane, serving both as a receptor for the preprotein-SecB complex and as an ATP-driven molecular motor driving the stepwise translocation of polypeptide chains across the membrane. The polypeptide is Protein translocase subunit SecA (Halorhodospira halophila (strain DSM 244 / SL1) (Ectothiorhodospira halophila (strain DSM 244 / SL1))).